Consider the following 495-residue polypeptide: Cytochrome P450 monooxygenase cnsC (495 aa).

Cys-434 serves as a coordination point for heme.

It belongs to the cytochrome P450 family. The cofactor is heme.

It functions in the pathway alkaloid biosynthesis. Cytochrome P450 monooxygenase; part of the gene cluster that mediates the biosynthesis of communesins, a prominent class of indole alkaloids with great potential as pharmaceuticals. Communesins are biosynthesized by the coupling of tryptamine and aurantioclavine, two building blocks derived from L-tryptophan. The L-tryptophan decarboxylase cnsB converts L-tryptophan to tryptamine, whereas the tryptophan dimethylallyltransferase cnsF converts L-tryptophan to 4-dimethylallyl tryptophan which is further transformed to aurantioclavine by the aurantioclavine synthase cnsA, probably aided by the catalase cnsD. The cytochrome P450 monooxygenase cnsC catalyzes the heterodimeric coupling between the two different indole moieties, tryptamine and aurantioclavine, to construct vicinal quaternary stereocenters and yield the heptacyclic communesin scaffold. The O-methyltransferase cnsE then methylates the communesin scaffold to produce communesin K, the simplest characterized communesin that contains the heptacyclic core. The dioxygenase cnsJ converts communesin K into communesin I. Acylation to introduce the hexadienyl group at position N16 of communesin I by the acyltransferase cnsK leads to the production of communesin B. The hexadienyl group is produced by the highly reducing polyketide synthase cnsI, before being hydrolytically removed from cnsI by the serine hydrolase cnsH, converted into hexadienyl-CoA by the CoA ligase cnsG, and then transferred to communesin I by cnsK. Surprisingly, cnsK may also be a promiscuous acyltransferase that can tolerate a range of acyl groups, including acetyl-, propionyl-, and butyryl-CoA, which lead to communesins A, G and H respectively. The roles of the alpha-ketoglutarate-dependent dioxygenases cnsM and cnsP have still to be determined. The polypeptide is Cytochrome P450 monooxygenase cnsC (Penicillium expansum (Blue mold rot fungus)).